A 623-amino-acid chain; its full sequence is Glutathione import ATP-binding protein GsiA (623 aa).

2 consecutive ABC transporter domains span residues 15–269 and 325–564; these read VSGL…QTLL and LRSG…RKLM. ATP-binding positions include 49–56 and 357–364; these read GESGSGKS.

This sequence belongs to the ABC transporter superfamily. Glutathione importer (TC 3.A.1.5.11) family. In terms of assembly, the complex is composed of two ATP-binding proteins (GsiA), two transmembrane proteins (GsiC and GsiD) and a solute-binding protein (GsiB).

The protein localises to the cell inner membrane. The catalysed reaction is glutathione(out) + ATP + H2O = glutathione(in) + ADP + phosphate + H(+). Functionally, part of the ABC transporter complex GsiABCD involved in glutathione import. Responsible for energy coupling to the transport system. The sequence is that of Glutathione import ATP-binding protein GsiA from Salmonella typhimurium (strain LT2 / SGSC1412 / ATCC 700720).